Reading from the N-terminus, the 507-residue chain is ATP synthase subunit alpha (507 aa).

168 to 175 lines the ATP pocket; sequence GDRQTGKT.

Belongs to the ATPase alpha/beta chains family. As to quaternary structure, F-type ATPases have 2 components, CF(1) - the catalytic core - and CF(0) - the membrane proton channel. CF(1) has five subunits: alpha(3), beta(3), gamma(1), delta(1), epsilon(1). CF(0) has three main subunits: a(1), b(2) and c(9-12). The alpha and beta chains form an alternating ring which encloses part of the gamma chain. CF(1) is attached to CF(0) by a central stalk formed by the gamma and epsilon chains, while a peripheral stalk is formed by the delta and b chains.

The protein localises to the cell membrane. The catalysed reaction is ATP + H2O + 4 H(+)(in) = ADP + phosphate + 5 H(+)(out). In terms of biological role, produces ATP from ADP in the presence of a proton gradient across the membrane. The alpha chain is a regulatory subunit. In Mesomycoplasma hyopneumoniae (strain J / ATCC 25934 / NCTC 10110) (Mycoplasma hyopneumoniae), this protein is ATP synthase subunit alpha.